The primary structure comprises 597 residues: U3 small nucleolar RNA-associated protein 6 homolog (597 aa).

HAT repeat units follow at residues 121–153, 156–188, 304–335, 488–520, and 524–557; these read ATKTRLSKVFSAMLAIHSNKPALWIMAAKWEME, LSSESARQLFLRALRFHPECPKLYKEYFRMELM, RKEERCCAVYEEAVKTLPTEAMWKCYITFCLE, GGYKKARAVFKSLQESRPFSVDFFRKMIQFEKE, and CNMANIREYYERALREFGSADSDLWMDYMKEELN.

The protein belongs to the UTP6 family. In terms of assembly, part of the small subunit (SSU) processome, composed of more than 70 proteins and the RNA chaperone small nucleolar RNA (snoRNA) U3.

The protein resides in the nucleus. The protein localises to the nucleolus. Functionally, part of the small subunit (SSU) processome, first precursor of the small eukaryotic ribosomal subunit. During the assembly of the SSU processome in the nucleolus, many ribosome biogenesis factors, an RNA chaperone and ribosomal proteins associate with the nascent pre-rRNA and work in concert to generate RNA folding, modifications, rearrangements and cleavage as well as targeted degradation of pre-ribosomal RNA by the RNA exosome. Involved in nucleolar processing of pre-18S ribosomal RNA. This Homo sapiens (Human) protein is U3 small nucleolar RNA-associated protein 6 homolog.